The primary structure comprises 287 residues: Ribosomal RNA small subunit methyltransferase A (287 aa).

Residues Asn-28, Leu-30, Gly-55, Glu-77, Asp-103, and Asn-123 each coordinate S-adenosyl-L-methionine.

Belongs to the class I-like SAM-binding methyltransferase superfamily. rRNA adenine N(6)-methyltransferase family. RsmA subfamily.

Its subcellular location is the cytoplasm. The enzyme catalyses adenosine(1518)/adenosine(1519) in 16S rRNA + 4 S-adenosyl-L-methionine = N(6)-dimethyladenosine(1518)/N(6)-dimethyladenosine(1519) in 16S rRNA + 4 S-adenosyl-L-homocysteine + 4 H(+). Specifically dimethylates two adjacent adenosines (A1518 and A1519) in the loop of a conserved hairpin near the 3'-end of 16S rRNA in the 30S particle. May play a critical role in biogenesis of 30S subunits. This Rhodopseudomonas palustris (strain TIE-1) protein is Ribosomal RNA small subunit methyltransferase A.